Here is a 295-residue protein sequence, read N- to C-terminus: Protoheme IX farnesyltransferase (295 aa).

The next 9 membrane-spanning stretches (helical) occupy residues 30-50 (LVVL…HPLI), 51-71 (AVIS…INMW), 93-115 (ISRS…IMMI), 119-136 (YISG…IYVY), 148-168 (IVIG…SVTG), 175-195 (LVLF…LSLL), 219-239 (IHIL…GLFL), 244-264 (LYEI…FQVF), and 275-295 (MFTY…LSSF).

This sequence belongs to the UbiA prenyltransferase family. Protoheme IX farnesyltransferase subfamily.

It is found in the cell inner membrane. The enzyme catalyses heme b + (2E,6E)-farnesyl diphosphate + H2O = Fe(II)-heme o + diphosphate. Its pathway is porphyrin-containing compound metabolism; heme O biosynthesis; heme O from protoheme: step 1/1. Its function is as follows. Converts heme B (protoheme IX) to heme O by substitution of the vinyl group on carbon 2 of heme B porphyrin ring with a hydroxyethyl farnesyl side group. This Ehrlichia ruminantium (strain Welgevonden) protein is Protoheme IX farnesyltransferase.